Here is a 394-residue protein sequence, read N- to C-terminus: Guanine nucleotide-binding protein G(s) subunit alpha (394 aa).

The disordered stretch occupies residues 1 to 25; it reads MGCLGDSKTEDQRNEEKAQREANKK. Glycine 2 is lipidated: N-palmitoyl glycine. Cysteine 3 carries S-palmitoyl cysteine lipidation. Over residues 7-25 the composition is skewed to basic and acidic residues; it reads SKTEDQRNEEKAQREANKK. In terms of domain architecture, G-alpha spans 39-394; that stretch reads ATHRLLLLGA…RMHLRQYELL (356 aa). The interval 42–55 is G1 motif; the sequence is RLLLLGAGESGKST. Residue 47–55 coordinates GTP; sequence GAGESGKST. Mg(2+) is bound at residue serine 54. A disordered region spans residues 68–90; it reads FNGEGGEEDPQAARSNSDGEKAT. The G2 motif stretch occupies residues 196–204; sequence DLLRCRVLT. Residues 197-204, 223-227, 292-295, and alanine 366 each bind GTP; these read LLRCRVLT, DVGGQ, and NKQD. Mg(2+) is bound at residue threonine 204. Residues 219 to 228 form a G3 motif region; the sequence is FHMFDVGGQR. Positions 288–295 are G4 motif; the sequence is ILFLNKQD. The tract at residues 364–369 is G5 motif; the sequence is TCAVDT.

This sequence belongs to the G-alpha family. G(s) subfamily. As to quaternary structure, heterotrimeric G proteins are composed of 3 units; alpha, beta and gamma. The alpha chain contains the guanine nucleotide binding site. Interacts with CRY1; the interaction may block GPCR-mediated regulation of cAMP concentrations. Interacts with ADCY6 and stimulates its adenylyl cyclase activity. Interacts with ADCY2 and ADCY5. Stimulates the ADCY5 adenylyl cyclase activity. Interaction with SASH1.

The protein resides in the cell membrane. In terms of biological role, guanine nucleotide-binding proteins (G proteins) function as transducers in numerous signaling pathways controlled by G protein-coupled receptors (GPCRs). Signaling involves the activation of adenylyl cyclases, resulting in increased levels of the signaling molecule cAMP. GNAS functions downstream of several GPCRs, including beta-adrenergic receptors. Stimulates the Ras signaling pathway via RAPGEF2. The polypeptide is Guanine nucleotide-binding protein G(s) subunit alpha (GNAS) (Cricetulus longicaudatus (Long-tailed dwarf hamster)).